The chain runs to 108 residues: Small ribosomal subunit protein eS25x (108 aa).

Residues 1 to 36 are disordered; it reads MAPKKDKVPPPSSKPAKSGGGKQKKKKWSKGKQKEK. Over residues 22–31 the composition is skewed to basic residues; sequence KQKKKKWSKG.

This sequence belongs to the eukaryotic ribosomal protein eS25 family.

This chain is Small ribosomal subunit protein eS25x (RPS25D), found in Arabidopsis thaliana (Mouse-ear cress).